Here is a 257-residue protein sequence, read N- to C-terminus: Diphthine synthase (257 aa).

S-adenosyl-L-methionine is bound by residues L9, D85, V88, 113–114, L164, A209, and H234; that span reads SI.

Belongs to the diphthine synthase family. As to quaternary structure, homodimer.

It carries out the reaction 2-[(3S)-amino-3-carboxypropyl]-L-histidyl-[translation elongation factor 2] + 3 S-adenosyl-L-methionine = diphthine-[translation elongation factor 2] + 3 S-adenosyl-L-homocysteine + 3 H(+). The protein operates within protein modification; peptidyl-diphthamide biosynthesis. Functionally, S-adenosyl-L-methionine-dependent methyltransferase that catalyzes the trimethylation of the amino group of the modified target histidine residue in translation elongation factor 2 (EF-2), to form an intermediate called diphthine. The three successive methylation reactions represent the second step of diphthamide biosynthesis. This chain is Diphthine synthase, found in Methanocaldococcus jannaschii (strain ATCC 43067 / DSM 2661 / JAL-1 / JCM 10045 / NBRC 100440) (Methanococcus jannaschii).